Here is a 180-residue protein sequence, read N- to C-terminus: MISQNNKGYALALFEIANEELKLEQYFQEVKKLNEIINENEDLVKLLSSKEIQLEKKLKILENIFTNHFTVNINNFLKLIITNNLFIYIKSILKIFLDIASKKLNISYGKIYSSKKLDEKIISNLEKFYSDKLSKKVEMLNLIDTTLIKGIRIEIENTIHENSIKNNIKELQKSILEKEQ.

The protein belongs to the ATPase delta chain family. F-type ATPases have 2 components, F(1) - the catalytic core - and F(0) - the membrane proton channel. F(1) has five subunits: alpha(3), beta(3), gamma(1), delta(1), epsilon(1). F(0) has three main subunits: a(1), b(2) and c(10-14). The alpha and beta chains form an alternating ring which encloses part of the gamma chain. F(1) is attached to F(0) by a central stalk formed by the gamma and epsilon chains, while a peripheral stalk is formed by the delta and b chains.

It localises to the cell membrane. Functionally, f(1)F(0) ATP synthase produces ATP from ADP in the presence of a proton or sodium gradient. F-type ATPases consist of two structural domains, F(1) containing the extramembraneous catalytic core and F(0) containing the membrane proton channel, linked together by a central stalk and a peripheral stalk. During catalysis, ATP synthesis in the catalytic domain of F(1) is coupled via a rotary mechanism of the central stalk subunits to proton translocation. This protein is part of the stalk that links CF(0) to CF(1). It either transmits conformational changes from CF(0) to CF(1) or is implicated in proton conduction. The sequence is that of ATP synthase subunit delta from Mycoplasma mobile (strain ATCC 43663 / 163K / NCTC 11711) (Mesomycoplasma mobile).